The primary structure comprises 405 residues: Tryptophan synthase beta chain (405 aa).

N6-(pyridoxal phosphate)lysine is present on lysine 98.

Belongs to the TrpB family. As to quaternary structure, tetramer of two alpha and two beta chains. It depends on pyridoxal 5'-phosphate as a cofactor.

It carries out the reaction (1S,2R)-1-C-(indol-3-yl)glycerol 3-phosphate + L-serine = D-glyceraldehyde 3-phosphate + L-tryptophan + H2O. Its pathway is amino-acid biosynthesis; L-tryptophan biosynthesis; L-tryptophan from chorismate: step 5/5. Functionally, the beta subunit is responsible for the synthesis of L-tryptophan from indole and L-serine. The protein is Tryptophan synthase beta chain of Bradyrhizobium diazoefficiens (strain JCM 10833 / BCRC 13528 / IAM 13628 / NBRC 14792 / USDA 110).